The chain runs to 501 residues: Probable cytochrome P450 6a20 (501 aa).

Cysteine 445 contacts heme.

The protein belongs to the cytochrome P450 family. The cofactor is heme.

It is found in the endoplasmic reticulum membrane. The protein resides in the microsome membrane. In terms of biological role, may be involved in the metabolism of insect hormones and in the breakdown of synthetic insecticides. The protein is Probable cytochrome P450 6a20 (Cyp6a20) of Drosophila melanogaster (Fruit fly).